The sequence spans 101 residues: Large ribosomal subunit protein uL24 (101 aa).

Belongs to the universal ribosomal protein uL24 family. In terms of assembly, part of the 50S ribosomal subunit.

Functionally, one of two assembly initiator proteins, it binds directly to the 5'-end of the 23S rRNA, where it nucleates assembly of the 50S subunit. Its function is as follows. One of the proteins that surrounds the polypeptide exit tunnel on the outside of the subunit. The sequence is that of Large ribosomal subunit protein uL24 from Clostridioides difficile (strain 630) (Peptoclostridium difficile).